We begin with the raw amino-acid sequence, 435 residues long: Putative magnesium transporter MRS2-H (435 aa).

A disordered region spans residues 19-54 (FSSSPESRRCRSVHRVPSRPRPPLAPPARVMGKGNS). The next 2 helical transmembrane spans lie at 369–389 (LTLIIASFGIAINTFIAAAFA) and 408–428 (FVGATSFLCMSIVILLFTYAW).

The protein belongs to the CorA metal ion transporter (MIT) (TC 1.A.35.5) family.

The protein localises to the membrane. Putative magnesium transporter. The polypeptide is Putative magnesium transporter MRS2-H (MRS2-H) (Oryza sativa subsp. indica (Rice)).